A 1370-amino-acid polypeptide reads, in one-letter code: DNA-directed RNA polymerase subunit beta (1370 aa).

The protein belongs to the RNA polymerase beta chain family. In terms of assembly, the RNAP catalytic core consists of 2 alpha, 1 beta, 1 beta' and 1 omega subunit. When a sigma factor is associated with the core the holoenzyme is formed, which can initiate transcription.

The enzyme catalyses RNA(n) + a ribonucleoside 5'-triphosphate = RNA(n+1) + diphosphate. Functionally, DNA-dependent RNA polymerase catalyzes the transcription of DNA into RNA using the four ribonucleoside triphosphates as substrates. This chain is DNA-directed RNA polymerase subunit beta, found in Bordetella avium (strain 197N).